The sequence spans 79 residues: UPF0180 protein BCAH187_A1552 (79 aa).

This sequence belongs to the UPF0180 family.

This chain is UPF0180 protein BCAH187_A1552, found in Bacillus cereus (strain AH187).